The sequence spans 819 residues: Kinesin-like protein KIN-13A (819 aa).

The segment at 150-178 (EPFEPSPFIPKEMDEDDDDMLPGSQPGPS) is disordered. Positions 199–535 (KIKVVVRKRP…LRYADRVKSL (337 aa)) constitute a Kinesin motor domain. 289 to 296 (GQTGSGKT) is an ATP binding site. The disordered stretch occupies residues 534–729 (SLSKGSNTRK…QSEKESSCDD (196 aa)). The span at 550–562 (TIPSSKDSSSAPS) shows a compositional bias: low complexity. Basic and acidic residues-rich tracts occupy residues 577–589 (QEKR…RKAA) and 614–631 (RGKE…ERVD). The span at 632–652 (LNSSRISYNSKPQSVQSSANL) shows a compositional bias: polar residues. Residues 669-686 (YRDDKPERQSNYAKKDSG) are compositionally biased toward basic and acidic residues. A compositionally biased stretch (low complexity) spans 697–719 (QQAKQLQQQQRPTSASASQNSSR). Residues 736 to 767 (LEEEEALIAAHRKEIENTMEIVREEMNLLAEV) are a coiled coil.

This sequence belongs to the TRAFAC class myosin-kinesin ATPase superfamily. Kinesin family. KIN-13 subfamily. In terms of tissue distribution, ubiquitous.

It localises to the microsome. The protein is Kinesin-like protein KIN-13A of Oryza sativa subsp. japonica (Rice).